A 441-amino-acid polypeptide reads, in one-letter code: Homogentisate 1,2-dioxygenase (441 aa).

Residue H287 is the Proton acceptor of the active site. 2 residues coordinate Fe cation: H330 and E336. Homogentisate-binding residues include Y345 and H366. H366 contacts Fe cation.

It belongs to the homogentisate dioxygenase family. In terms of assembly, hexamer; dimer of trimers. Requires Fe cation as cofactor.

The enzyme catalyses homogentisate + O2 = 4-maleylacetoacetate + H(+). Its pathway is amino-acid degradation; L-phenylalanine degradation; acetoacetate and fumarate from L-phenylalanine: step 4/6. Its function is as follows. Involved in the catabolism of homogentisate (2,5-dihydroxyphenylacetate or 2,5-OH-PhAc), a central intermediate in the degradation of phenylalanine and tyrosine. Catalyzes the oxidative ring cleavage of the aromatic ring of homogentisate to yield maleylacetoacetate. This Xanthomonas oryzae pv. oryzae (strain MAFF 311018) protein is Homogentisate 1,2-dioxygenase.